Consider the following 229-residue polypeptide: Transmembrane protein 182 (229 aa).

The N-terminal stretch at 1 to 26 (MRLNVAVFFGALFGALGVLLFLVAFG) is a signal peptide. At 27 to 114 (SDYWLLATEV…SYDSAIIYRG (88 aa)) the chain is on the extracellular side. N-linked (GlcNAc...) asparagine glycosylation occurs at asparagine 47. The interaction with ITGB1 stretch occupies residues 49 to 59 (TFHHEGFFWRC). N-linked (GlcNAc...) asparagine glycans are attached at residues asparagine 68, asparagine 85, and asparagine 102. The helical transmembrane segment at 115–135 (FWAVLLLLGVVAALTASFLII) threads the bilayer. Topologically, residues 136–153 (CAAPFSSHFLYKAGGGSY) are cytoplasmic. A helical transmembrane segment spans residues 154–174 (IASGVLFSLVVILYVIWVQAV). The Extracellular portion of the chain corresponds to 175–200 (ADMESYRALRMRDCWEFTPSILYGWS). The chain crosses the membrane as a helical span at residues 201–221 (FFLAPAGVFFSLLAGLLFLVV). The Cytoplasmic segment spans residues 222–229 (GRHIQIHH).

The protein belongs to the TMEM182 family. As to quaternary structure, interacts with ITGB1. As to expression, highly expressed in white adipose tissues (WAT), with 10-fold to 20-fold higher levels than in brown adipose tissue (BAT). Also expressed in skeletal muscle, heart and lung. Lower relative levels of expression in kidney, spleen, testis, brain and liver.

It localises to the cell membrane. Its function is as follows. Negatively regulates myogenesis and skeletal muscle regeneration via its association with ITGB1. Modulates ITGB1 activation by decreasing ITGB1-LAMB1 interaction and inhibiting ITGB1-mediated intracellular signaling during myogenesis. The chain is Transmembrane protein 182 (Tmem182) from Mus musculus (Mouse).